A 118-amino-acid polypeptide reads, in one-letter code: Ribosome-binding factor A (118 aa).

It belongs to the RbfA family. In terms of assembly, monomer. Binds 30S ribosomal subunits, but not 50S ribosomal subunits or 70S ribosomes.

The protein resides in the cytoplasm. One of several proteins that assist in the late maturation steps of the functional core of the 30S ribosomal subunit. Associates with free 30S ribosomal subunits (but not with 30S subunits that are part of 70S ribosomes or polysomes). Required for efficient processing of 16S rRNA. May interact with the 5'-terminal helix region of 16S rRNA. The protein is Ribosome-binding factor A of Dehalococcoides mccartyi (strain ATCC BAA-2266 / KCTC 15142 / 195) (Dehalococcoides ethenogenes (strain 195)).